The chain runs to 114 residues: Large ribosomal subunit protein bL19 (114 aa).

It belongs to the bacterial ribosomal protein bL19 family.

In terms of biological role, this protein is located at the 30S-50S ribosomal subunit interface and may play a role in the structure and function of the aminoacyl-tRNA binding site. The sequence is that of Large ribosomal subunit protein bL19 from Clavibacter sepedonicus (Clavibacter michiganensis subsp. sepedonicus).